The primary structure comprises 526 residues: Exodeoxyribonuclease 7 large subunit (526 aa).

The disordered stretch occupies residues 499-526; it reads AGEDGTPSQAPKKRPARAGEPTKQGSLF.

This sequence belongs to the XseA family. In terms of assembly, heterooligomer composed of large and small subunits.

It localises to the cytoplasm. The catalysed reaction is Exonucleolytic cleavage in either 5'- to 3'- or 3'- to 5'-direction to yield nucleoside 5'-phosphates.. Its function is as follows. Bidirectionally degrades single-stranded DNA into large acid-insoluble oligonucleotides, which are then degraded further into small acid-soluble oligonucleotides. This chain is Exodeoxyribonuclease 7 large subunit, found in Sinorhizobium medicae (strain WSM419) (Ensifer medicae).